Consider the following 840-residue polypeptide: Telomere length regulation protein TEL2 homolog (840 aa).

At M1 the chain carries N-acetylmethionine. Hydroxyproline occurs at positions 374, 419, and 422. A disordered region spans residues P443–I497. S457 carries the phosphoserine modification. At S486 the chain carries Phosphoserine; by CK2. S488, S492, and S837 each carry phosphoserine. Residues S488–I497 show a composition bias toward acidic residues.

This sequence belongs to the TEL2 family. In terms of assembly, component of the TTT complex composed of TELO2, TTI1 and TTI2. Interacts with ATM, ATR, MTOR, PRKDC, RUVBL2, TTI1, TTI2, SMG1 and TRRAP. Component of the mTORC1 and mTORC2 complexes. Interacts (phosphorylated form) with PIH1D1. Interaction with PIH1D1 mediates interaction of TELO2 with the R2TP complex composed of RUVBL1, RUVBL2, PIH1D1, and RPAP3. Hydroxylation by PHD3 is required for a proper interaction with ATR, and activation of the ATR/CHK1/p53 pathway following DNA damage. In terms of processing, phosphorylated at Ser-486 by CK2 following growth factor deprivation, leading to its subsequent ubiquitination by the SCF(FBXO9) complex. Phosphorylation by CK2 only takes place when TELO2 is bound to mTORC1, not mTORC2; leading to selective ubiquitination of mTORC1-associated protein. Post-translationally, ubiquitinated by the SCF(FBXO9) complex following phosphorylation by CK2 in response to growth factor deprivation, leading to its degradation by the proteasome. Only mTORC1-associated protein is ubiquitinated and degraded, leading to selective inactivation of mTORC1 to restrain cell growth and protein translation, while mTORC2 is activated due to the relief of feedback inhibition by mTORC1.

It localises to the cytoplasm. Its subcellular location is the membrane. The protein resides in the nucleus. It is found in the chromosome. The protein localises to the telomere. Regulator of the DNA damage response (DDR). Part of the TTT complex that is required to stabilize protein levels of the phosphatidylinositol 3-kinase-related protein kinase (PIKK) family proteins. The TTT complex is involved in the cellular resistance to DNA damage stresses, like ionizing radiation (IR), ultraviolet (UV) and mitomycin C (MMC). Together with the TTT complex and HSP90 may participate in the proper folding of newly synthesized PIKKs. Promotes assembly, stabilizes and maintains the activity of mTORC1 and mTORC2 complexes, which regulate cell growth and survival in response to nutrient and hormonal signals. May be involved in telomere length regulation. This is Telomere length regulation protein TEL2 homolog (Telo2) from Mus musculus (Mouse).